We begin with the raw amino-acid sequence, 109 residues long: uncharacterized protein (109 aa).

The segment at 1–26 (MTPRSLPRYGNSSRRKSFPMHRPSNV) is disordered.

This is an uncharacterized protein from Mycobacterium bovis (strain ATCC BAA-935 / AF2122/97).